The chain runs to 375 residues: MNSLQVLTKKVLIENKAFSEYHEDDIFILQQLGLWWHNGPIGFCKQCKMVTSGSMSCSDVDSYELDRALVRAVKKNQTDLIKLFVLWGANINYGIICAKTERTKVLCIQLGADPKFLDVGLYNMFIDLIKQQKVLLAIDIYYDNISILDSFDSHDFYVLIDFIYNCFILNLDEKEKMIKNTYVLKFWFKIAIEFNLIKPIRFLSKKFPHLDYWRLKTAVYLGNVDEIHHAYFQENIRLDPNDMMSLACMYPQNKLGIYYCFVLGANINTALETLIGFINHEVNREITFFSNYGIWSNVHFCISLGANPYTKKIQETLLRQEKNVIMKLLFKKGLLSPHSILHKKILEPSEVRKIISTYEYTETFHSFSLLRDNLQ.

Belongs to the asfivirus MGF 360 family.

In terms of biological role, plays a role in virus cell tropism, and may be required for efficient virus replication in macrophages. The polypeptide is Protein MGF 360-5L (African swine fever virus (isolate Portugal/Lis 57/1957) (ASFV)).